A 591-amino-acid chain; its full sequence is DDB1- and CUL4-associated factor 8 (591 aa).

Over residues 1 to 14 the composition is skewed to basic and acidic residues; the sequence is MSSKRPSTDGRRDL. Positions 1–140 are disordered; it reads MSSKRPSTDG…EDWVSSETTA (140 aa). A phosphoserine mark is found at S21 and S22. A Nuclear export signal motif is present at residues 39 to 50; it reads IEVEASDLSLSL. Composition is skewed to basic and acidic residues over residues 65-99 and 118-131; these read RGTD…HGHS and SRDQ…RALE. Residues S99, S123, and S124 each carry the phosphoserine modification. WD repeat units follow at residues 185–224, 228–269, 275–315, 323–363, 379–418, 426–466, and 470–509; these read GHTG…PVLD, GHKS…CCKN, QHKG…PASK, EKKV…ENEN, ESKA…GAQY, RNNA…IIQF, and DKGG…STEL. R198 bears the Omega-N-methylarginine; by PRMT1 mark. Residues 552 to 591 form a disordered region; it reads HRRWREPGVGATDADSDESPSSSDTSDEEEGPDRVQCMPS.

This sequence belongs to the WD repeat DCAF8 family. As to quaternary structure, interacts with DDB1, CUL4A and CUL4B. Interacts with KPNA1, KPNB1 and XPO1.

The protein localises to the nucleus. It is found in the cytoplasm. Its pathway is protein modification; protein ubiquitination. Functionally, may function as a substrate receptor for CUL4-DDB1 E3 ubiquitin-protein ligase complex. The chain is DDB1- and CUL4-associated factor 8 (Dcaf8) from Rattus norvegicus (Rat).